The chain runs to 272 residues: tRNA pseudouridine synthase A (272 aa).

The active-site Nucleophile is D51. Residue Y109 participates in substrate binding.

The protein belongs to the tRNA pseudouridine synthase TruA family. Homodimer.

It catalyses the reaction uridine(38/39/40) in tRNA = pseudouridine(38/39/40) in tRNA. Its function is as follows. Formation of pseudouridine at positions 38, 39 and 40 in the anticodon stem and loop of transfer RNAs. This chain is tRNA pseudouridine synthase A, found in Verminephrobacter eiseniae (strain EF01-2).